The sequence spans 449 residues: MPATLLRAVAGSHRVLSKAHQCRRIGHLMLKPLKEFENTTCSTLAIRQNLDLFLPDKTAGGLNKSQILEMNQKKSDTSMLSPLNAAHYQDEKAHLPTMKSFGTHRRVTHKPDLLDSKWFIKILKRHFSSVSTETLVPKQDFPQMKRPLKASRTRQPSGTNLPVVSVNEDLMHCTAFATADEYHLGNLSQDLASHGYVEVTSLPRDAANILVMGVENSAKEGDPGTIFFFREGAAVFWNVKDKTMKHVMKVLEKHEIQPYEIALVHWENEELNYIKIEGQSKLHRGEIKLNSELDLDDAILEKFAFSNALCLSVKLAIWEASLDKFIESIQSIPEALKAGKKVKLSHEEVMQKIGELFALRHRINLSSDFLITPDFYWDRENLEGLYDKTCQFLSIGRRVKVMNEKLQHCMEPTDLMRNHLNEKRALRLEWMIVILITIEVMFELGRVFF.

A mitochondrion-targeting transit peptide spans 1–16; that stretch reads MPATLLRAVAGSHRVL.

This sequence belongs to the RMD1/sif2 family. As to quaternary structure, homooligomer.

The protein localises to the mitochondrion. Functionally, required for mitochondrial translation, possibly by coordinating the assembly or maintenance of the mitochondrial ribosome. This Pongo abelii (Sumatran orangutan) protein is Required for meiotic nuclear division protein 1 homolog (RMND1).